The chain runs to 427 residues: C4-dicarboxylate transport protein (427 aa).

The next 9 helical transmembrane spans lie at 5–25 (IFSS…FLGH), 44–64 (LIKM…IAGM), 76–96 (IALL…LCVV), 142–162 (IGAF…LFGF), 184–206 (VIFG…AMAF), 222–242 (LIAC…GSIA), 307–327 (IYLT…LDLF), 330–350 (ITLL…TGSG), and 352–372 (IVLA…LALI).

Belongs to the dicarboxylate/amino acid:cation symporter (DAACS) (TC 2.A.23) family.

The protein localises to the cell inner membrane. Responsible for the transport of dicarboxylates such as succinate, fumarate, and malate from the periplasm across the membrane. The polypeptide is C4-dicarboxylate transport protein (Aeromonas salmonicida (strain A449)).